A 324-amino-acid polypeptide reads, in one-letter code: MKNFNLTHRIVMAPMARMRSYGNIPQPHVALYYCQRTTPGGLLISEATGVSETAMAYQNMPGIWRKEQIEAWKPIVDAVHSHGGIFFCQLWHAGRVSHQDCQPNGESPVSSTDKPFADDPSNEFTPPRRLRTDEIPTIINDFRLAARNATEAGFDGVEIHGAHGYLIDQFMKDSVNDRTDSYGGSLENRCRFALQVIEAVSKEIGPDRVGIRLSPFADYMESGDTDPKRLGLYMAKSLNRFEILYCHMIEPRMKTVSEIFECRESLTPMRNAFNGTFIVAGGYTREDGNKAVAEGRTDLVAYGRLFLANPDLPKRFELNAPLNK.

At Met1 the chain carries N-acetylmethionine. Residues 14–16 (PMA), Ala47, and Gln89 contribute to the FMN site. Over residues 99–113 (QDCQPNGESPVSSTD) the composition is skewed to polar residues. The segment at 99 to 128 (QDCQPNGESPVSSTDKPFADDPSNEFTPPR) is disordered. 160–163 (HGAH) is a substrate binding site. The Proton donor role is filled by Tyr165. Residue Arg212 participates in FMN binding. Position 252 (Arg252) interacts with substrate. Residues Gly282 and 303–304 (GR) contribute to the FMN site.

The protein belongs to the NADH:flavin oxidoreductase/NADH oxidase family. The cofactor is FMN.

Its function is as follows. Putative oxophytodienoate reductase that may be involved in the biosynthesis or metabolism of oxylipin signaling molecules. The polypeptide is Putative 12-oxophytodienoate reductase-like protein 1 (Arabidopsis thaliana (Mouse-ear cress)).